Reading from the N-terminus, the 315-residue chain is Methenyltetrahydromethanopterin cyclohydrolase (315 aa).

Belongs to the MCH family.

Its subcellular location is the cytoplasm. The catalysed reaction is 5,10-methenyl-5,6,7,8-tetrahydromethanopterin + H2O = N(5)-formyl-5,6,7,8-tetrahydromethanopterin + H(+). It functions in the pathway one-carbon metabolism; methanogenesis from CO(2); 5,10-methenyl-5,6,7,8-tetrahydromethanopterin from CO(2): step 3/3. Catalyzes the reversible interconversion of 5-formyl-H(4)MPT to methenyl-H(4)MPT(+). This is Methenyltetrahydromethanopterin cyclohydrolase from Methanosphaerula palustris (strain ATCC BAA-1556 / DSM 19958 / E1-9c).